The primary structure comprises 424 residues: ATP-citrate synthase alpha chain protein 3 (424 aa).

Positions 343, 345, and 376 each coordinate citrate.

Belongs to the succinate/malate CoA ligase beta subunit family. In terms of assembly, heterooctamer of 4 alpha and 4 beta chains.

Its subcellular location is the cytoplasm. The protein resides in the cytosol. It catalyses the reaction oxaloacetate + acetyl-CoA + ADP + phosphate = citrate + ATP + CoA. Functionally, ATP citrate-lyase is the primary enzyme responsible for the synthesis of cytosolic acetyl-CoA, used for the elongation of fatty acids and biosynthesis of isoprenoids, flavonoids and malonated derivatives. May supply substrate to the cytosolic acetyl-CoA carboxylase, which generates the malonyl-CoA used for the synthesis of a multitude of compounds, including very long chain fatty acids and flavonoids. Required for normal growth and development and elongation of C18 fatty acids to C20 to C24 fatty acids in seeds. In contrast to all known animal ACL enzymes having a homomeric structure, plant ACLs are composed of alpha and beta chains. The polypeptide is ATP-citrate synthase alpha chain protein 3 (ACLA-3) (Arabidopsis thaliana (Mouse-ear cress)).